We begin with the raw amino-acid sequence, 414 residues long: Protein RecA (414 aa).

78-85 is an ATP binding site; it reads GPESSGKT. Positions 361–384 are enriched in basic and acidic residues; it reads QEKAVEALKKEEGSKEDALTGNKD. The segment at 361–414 is disordered; sequence QEKAVEALKKEEGSKEDALTGNKDETDDSAQKNSAASKAKRAEVVGLPADDSLF.

The protein belongs to the RecA family.

It localises to the cytoplasm. Functionally, can catalyze the hydrolysis of ATP in the presence of single-stranded DNA, the ATP-dependent uptake of single-stranded DNA by duplex DNA, and the ATP-dependent hybridization of homologous single-stranded DNAs. It interacts with LexA causing its activation and leading to its autocatalytic cleavage. This chain is Protein RecA, found in Treponema denticola (strain ATCC 35405 / DSM 14222 / CIP 103919 / JCM 8153 / KCTC 15104).